The primary structure comprises 225 residues: Biosynthetic peptidoglycan transglycosylase (225 aa).

A helical transmembrane segment spans residues 8-28; the sequence is VLLIFIGAILLIQLWIFSSLV.

Belongs to the glycosyltransferase 51 family.

Its subcellular location is the cell inner membrane. It carries out the reaction [GlcNAc-(1-&gt;4)-Mur2Ac(oyl-L-Ala-gamma-D-Glu-L-Lys-D-Ala-D-Ala)](n)-di-trans,octa-cis-undecaprenyl diphosphate + beta-D-GlcNAc-(1-&gt;4)-Mur2Ac(oyl-L-Ala-gamma-D-Glu-L-Lys-D-Ala-D-Ala)-di-trans,octa-cis-undecaprenyl diphosphate = [GlcNAc-(1-&gt;4)-Mur2Ac(oyl-L-Ala-gamma-D-Glu-L-Lys-D-Ala-D-Ala)](n+1)-di-trans,octa-cis-undecaprenyl diphosphate + di-trans,octa-cis-undecaprenyl diphosphate + H(+). Its pathway is cell wall biogenesis; peptidoglycan biosynthesis. Functionally, peptidoglycan polymerase that catalyzes glycan chain elongation from lipid-linked precursors. In Acinetobacter baumannii (strain ACICU), this protein is Biosynthetic peptidoglycan transglycosylase.